A 445-amino-acid polypeptide reads, in one-letter code: Glucose-6-phosphate isomerase (445 aa).

The active-site Proton donor is Glu-284. Catalysis depends on residues His-305 and Lys-419.

Belongs to the GPI family.

Its subcellular location is the cytoplasm. The enzyme catalyses alpha-D-glucose 6-phosphate = beta-D-fructose 6-phosphate. It participates in carbohydrate biosynthesis; gluconeogenesis. Its pathway is carbohydrate degradation; glycolysis; D-glyceraldehyde 3-phosphate and glycerone phosphate from D-glucose: step 2/4. Functionally, catalyzes the reversible isomerization of glucose-6-phosphate to fructose-6-phosphate. The chain is Glucose-6-phosphate isomerase from Leptospira borgpetersenii serovar Hardjo-bovis (strain JB197).